Consider the following 157-residue polypeptide: Endoribonuclease YbeY (157 aa).

Zn(2+) contacts are provided by His114, His118, and His124.

The protein belongs to the endoribonuclease YbeY family. Requires Zn(2+) as cofactor.

The protein resides in the cytoplasm. In terms of biological role, single strand-specific metallo-endoribonuclease involved in late-stage 70S ribosome quality control and in maturation of the 3' terminus of the 16S rRNA. This Yersinia enterocolitica serotype O:8 / biotype 1B (strain NCTC 13174 / 8081) protein is Endoribonuclease YbeY.